A 126-amino-acid polypeptide reads, in one-letter code: Holo-[acyl-carrier-protein] synthase (126 aa).

Mg(2+) contacts are provided by Asp8 and Glu57.

The protein belongs to the P-Pant transferase superfamily. AcpS family. The cofactor is Mg(2+).

Its subcellular location is the cytoplasm. The enzyme catalyses apo-[ACP] + CoA = holo-[ACP] + adenosine 3',5'-bisphosphate + H(+). Its function is as follows. Transfers the 4'-phosphopantetheine moiety from coenzyme A to a Ser of acyl-carrier-protein. The chain is Holo-[acyl-carrier-protein] synthase from Trichlorobacter lovleyi (strain ATCC BAA-1151 / DSM 17278 / SZ) (Geobacter lovleyi).